Here is a 401-residue protein sequence, read N- to C-terminus: MWTGQPASGPPFDHENHSASCTQHFALFSSPSPANSEPKSMLSAWAHRLCVRAVDVLFGTFLYVPLGILFLKKSLSGFGDGDWDSSQIPDLHGKVAVVTGGNAGIGYHTVRQLAAKGAKVYLAARSESRAKEAIKRLREENPDIPQEKLVWLPLDLSSQAQVVDAARDLMSKTERLDILVNNAGVDPYNYVKTADGFEMTMAVNHIGHWTLTYCLLPLLKATAAQQGSDVRVITLSSSGERNHSANNHFTTLKDLDDPCAGPGWEDSRLAQGKRYGTSKLANILFATELQRRMDEEGAGILSLSLNPGTIRTEGAADVMPLVTQPLVWLLFTDAAKGADTTMFAATAREVRENSEQWKGRYLDGPGRIKPPSPKARDAVAARNLWNITAAAVKGTGALEKL.

An N-linked (GlcNAc...) asparagine glycan is attached at Asn16. Residues 51 to 71 traverse the membrane as a helical segment; that stretch reads VRAVDVLFGTFLYVPLGILFL. NAD(+) is bound by residues 72–80, 99–100, and 118–120; these read KKSLSGFGD, TG, and AKV. Asn242 carries N-linked (GlcNAc...) asparagine glycosylation. Tyr275 (proton acceptor) is an active-site residue. NAD(+)-binding positions include 275–279 and 308–310; these read YGTSK and GTI. Asn386 carries an N-linked (GlcNAc...) asparagine glycan.

It localises to the membrane. It functions in the pathway secondary metabolite biosynthesis; terpenoid biosynthesis. Functionally, short chain dehydrogenase/reductase; part of the gene cluster that mediates the biosynthesis of the diterpenoid pyrones higginsianins A and B. The first step of the pathway is the synthesis of the alpha-pyrone moiety by the polyketide synthase dpchA via condensation of one acetyl-CoA starter unit with 3 malonyl-CoA units and 2 methylations. The alpha-pyrone is then combined with geranylgeranyl pyrophosphate (GGPP) formed by the GGPP synthase dpchD through the action of the prenyltransferase dpchC to yield a linear alpha-pyrone diterpenoid. Subsequent steps in the diterpenoid pyrone biosynthetic pathway involve the decalin core formation, which is initiated by the epoxidation of the C10-C11 olefin by the FAD-dependent oxidoreductase dpchE, and is followed by a cyclization cascade catalyzed by the terpene cyclase dpchB. The short chain dehydrogenase/reductase dpchG then oxidizes the 8S hydroxy group to a ketone and the short chain dehydrogenase/reductase dpchH reduces the ketone to the 8R hydroxy group to yield higginsianin B. Finally, the FAD-dependent oxidoreductase dpchF converts higginsianin B into higginsianin A. This is Short chain dehydrogenase/reductase dpchH from Colletotrichum higginsianum (strain IMI 349063) (Crucifer anthracnose fungus).